The chain runs to 134 residues: Syncollin (134 aa).

The first 21 residues, 1-21 (MSPLCLLLLALALVAVPGARG), serve as a signal peptide directing secretion.

In terms of assembly, monomer and homooligomer; most probably hexameric. Interacts with GP2. According to PubMed:10753942 interaction with syntaxins shown in PubMed:9244306 is physiologically questionable. Contains intrachain disulfide bonds. Specifically expressed in pancreas and also detected in secretory granules of parotid gland (at protein level). Expressed in pancreas, spleen, small intestine, lung and neutrophilic granulocytes (at protein level). Expressed by epithelial cells in duodenum and colon.

The protein resides in the zymogen granule membrane. It is found in the zymogen granule lumen. Functionally, functions in exocytosis in pancreatic acinar cells regulating the fusion of zymogen granules with each other. May have a pore-forming activity on membranes and regulate exocytosis in other exocrine tissues. This chain is Syncollin (Sycn), found in Rattus norvegicus (Rat).